A 98-amino-acid polypeptide reads, in one-letter code: PsbF-like protein (98 aa).

2 helical membrane-spanning segments follow: residues valine 5 to lysine 25 and threonine 73 to methionine 93.

The protein belongs to the PsbE/PsbF family.

The protein resides in the membrane. In terms of biological role, unknown. Resembles PsbF, one of the subunits of the photosystem II reaction center. However, it encodes asparagine rather than histidine at the site PsbF uses to bind heme. In Prochlorococcus marinus (strain MIT 9312), this protein is PsbF-like protein.